The following is a 286-amino-acid chain: Acetyl-coenzyme A carboxylase carboxyl transferase subunit beta (286 aa).

The region spanning 28 to 286 (LMQKCSNCKK…KMHMDGRQLK (259 aa)) is the CoA carboxyltransferase N-terminal domain. The Zn(2+) site is built by Cys-32, Cys-35, Cys-51, and Cys-54. The C4-type zinc finger occupies 32 to 54 (CSNCKKIYYRKEMVKALQVCPNC).

Belongs to the AccD/PCCB family. In terms of assembly, acetyl-CoA carboxylase is a heterohexamer composed of biotin carboxyl carrier protein (AccB), biotin carboxylase (AccC) and two subunits each of ACCase subunit alpha (AccA) and ACCase subunit beta (AccD). Zn(2+) serves as cofactor.

The protein localises to the cytoplasm. It catalyses the reaction N(6)-carboxybiotinyl-L-lysyl-[protein] + acetyl-CoA = N(6)-biotinyl-L-lysyl-[protein] + malonyl-CoA. The protein operates within lipid metabolism; malonyl-CoA biosynthesis; malonyl-CoA from acetyl-CoA: step 1/1. Functionally, component of the acetyl coenzyme A carboxylase (ACC) complex. Biotin carboxylase (BC) catalyzes the carboxylation of biotin on its carrier protein (BCCP) and then the CO(2) group is transferred by the transcarboxylase to acetyl-CoA to form malonyl-CoA. In Oceanobacillus iheyensis (strain DSM 14371 / CIP 107618 / JCM 11309 / KCTC 3954 / HTE831), this protein is Acetyl-coenzyme A carboxylase carboxyl transferase subunit beta.